Here is a 473-residue protein sequence, read N- to C-terminus: Photosystem II CP43 reaction center protein (473 aa).

A propeptide spanning residues 1–14 is cleaved from the precursor; it reads MKTLYSLRRFYHVE. The residue at position 15 (threonine 15) is an N-acetylthreonine. At threonine 15 the chain carries Phosphothreonine. The next 5 helical transmembrane spans lie at 69–93, 134–155, 178–200, 255–275, and 291–312; these read LFEVAHFVPEKPMYEQGLILLPHLA, LLGPETLEESFPFFGYVWKDRN, KALYFGGVYDTWAPGGGDVRKIT, KPFAWARRALVWSGEAYLSYS, and WFNNTAYPSEFYGPTGPEASQA. Position 367 (glutamate 367) interacts with [CaMn4O5] cluster. A helical membrane pass occupies residues 447-471; it reads RARAAAAGFEKGIDRDFEPVLSMTP.

The protein belongs to the PsbB/PsbC family. PsbC subfamily. As to quaternary structure, PSII is composed of 1 copy each of membrane proteins PsbA, PsbB, PsbC, PsbD, PsbE, PsbF, PsbH, PsbI, PsbJ, PsbK, PsbL, PsbM, PsbT, PsbX, PsbY, PsbZ, Psb30/Ycf12, at least 3 peripheral proteins of the oxygen-evolving complex and a large number of cofactors. It forms dimeric complexes. Binds multiple chlorophylls and provides some of the ligands for the Ca-4Mn-5O cluster of the oxygen-evolving complex. It may also provide a ligand for a Cl- that is required for oxygen evolution. PSII binds additional chlorophylls, carotenoids and specific lipids. serves as cofactor.

The protein localises to the plastid. It is found in the chloroplast thylakoid membrane. Its function is as follows. One of the components of the core complex of photosystem II (PSII). It binds chlorophyll and helps catalyze the primary light-induced photochemical processes of PSII. PSII is a light-driven water:plastoquinone oxidoreductase, using light energy to abstract electrons from H(2)O, generating O(2) and a proton gradient subsequently used for ATP formation. This chain is Photosystem II CP43 reaction center protein, found in Capsella bursa-pastoris (Shepherd's purse).